Consider the following 777-residue polypeptide: Phosphoribosylformylglycinamidine synthase subunit PurL (777 aa).

The active site involves histidine 50. Residues tyrosine 53 and lysine 92 each coordinate ATP. Glutamate 94 serves as a coordination point for Mg(2+). Substrate is bound by residues 95 to 98 (SHNH) and arginine 117. Catalysis depends on histidine 96, which acts as the Proton acceptor. Aspartate 118 provides a ligand contact to Mg(2+). Glutamine 241 provides a ligand contact to substrate. Aspartate 269 is a binding site for Mg(2+). 313–315 (ESQ) contacts substrate. Residues aspartate 520 and glycine 557 each coordinate ATP. Position 558 (asparagine 558) interacts with Mg(2+). Serine 560 is a binding site for substrate.

It belongs to the FGAMS family. Monomer. Part of the FGAM synthase complex composed of 1 PurL, 1 PurQ and 2 PurS subunits.

The protein localises to the cytoplasm. It carries out the reaction N(2)-formyl-N(1)-(5-phospho-beta-D-ribosyl)glycinamide + L-glutamine + ATP + H2O = 2-formamido-N(1)-(5-O-phospho-beta-D-ribosyl)acetamidine + L-glutamate + ADP + phosphate + H(+). It functions in the pathway purine metabolism; IMP biosynthesis via de novo pathway; 5-amino-1-(5-phospho-D-ribosyl)imidazole from N(2)-formyl-N(1)-(5-phospho-D-ribosyl)glycinamide: step 1/2. In terms of biological role, part of the phosphoribosylformylglycinamidine synthase complex involved in the purines biosynthetic pathway. Catalyzes the ATP-dependent conversion of formylglycinamide ribonucleotide (FGAR) and glutamine to yield formylglycinamidine ribonucleotide (FGAM) and glutamate. The FGAM synthase complex is composed of three subunits. PurQ produces an ammonia molecule by converting glutamine to glutamate. PurL transfers the ammonia molecule to FGAR to form FGAM in an ATP-dependent manner. PurS interacts with PurQ and PurL and is thought to assist in the transfer of the ammonia molecule from PurQ to PurL. The protein is Phosphoribosylformylglycinamidine synthase subunit PurL of Trichormus variabilis (strain ATCC 29413 / PCC 7937) (Anabaena variabilis).